Reading from the N-terminus, the 100-residue chain is Cytochrome bo(3) ubiquinol oxidase subunit 4 (100 aa).

At 1–9 the chain is on the cytoplasmic side; it reads MLKNRYLKY. Residues 10–32 traverse the membrane as a helical segment; sequence LFILILLSILSIMPIFAIIYRIF. Residues 33–36 lie on the Extracellular side of the membrane; sequence SRNY. The chain crosses the membrane as a helical span at residues 37-59; that stretch reads LYAFIIVCLFFQILAHIKFFLNL. The Cytoplasmic segment spans residues 60 to 68; sequence DFSLEQRWK. A helical transmembrane segment spans residues 69-90; the sequence is LISVIFSLVVGLIILLGSIWVI. Residues 91–100 are Extracellular-facing; that stretch reads KNLNNNLCIM.

It belongs to the cytochrome c oxidase bacterial subunit 4 family. In terms of assembly, heterooctamer of two A chains, two B chains, two C chains and two D chains.

The protein resides in the cell membrane. Cytochrome bo(3) ubiquinol terminal oxidase is the component of the aerobic respiratory chain of E.coli that predominates when cells are grown at high aeration. Has proton pump activity across the membrane in addition to electron transfer, pumping 2 protons/electron. The protein is Cytochrome bo(3) ubiquinol oxidase subunit 4 (cyoD) of Buchnera aphidicola subsp. Baizongia pistaciae (strain Bp).